We begin with the raw amino-acid sequence, 308 residues long: Mannan endo-1,4-beta-mannosidase (308 aa).

Residue Glu-125 is the Proton donor of the active site. The active-site Nucleophile is the Glu-220. Residues 284–308 (DGLQETSKPSTVFTDDNGGHPEPPT) are disordered. The segment covering 287–297 (QETSKPSTVFT) has biased composition (polar residues).

It belongs to the glycosyl hydrolase 5 (cellulase A) family.

It catalyses the reaction Random hydrolysis of (1-&gt;4)-beta-D-mannosidic linkages in mannans, galactomannans and glucomannans.. In terms of biological role, catalyzes the endo hydrolysis of beta-1,4-linked mannan, galactomannan and glucomannan. It is able to hydrolyze mannosidic linkages that are flanked by mannose or glucose. This Salipaludibacillus agaradhaerens (Bacillus agaradhaerens) protein is Mannan endo-1,4-beta-mannosidase.